We begin with the raw amino-acid sequence, 373 residues long: DNA replication and repair protein RecF (373 aa).

30-37 (GPNGQGKT) provides a ligand contact to ATP.

Belongs to the RecF family.

The protein resides in the cytoplasm. Its function is as follows. The RecF protein is involved in DNA metabolism; it is required for DNA replication and normal SOS inducibility. RecF binds preferentially to single-stranded, linear DNA. It also seems to bind ATP. In Streptomyces avermitilis (strain ATCC 31267 / DSM 46492 / JCM 5070 / NBRC 14893 / NCIMB 12804 / NRRL 8165 / MA-4680), this protein is DNA replication and repair protein RecF.